A 217-amino-acid chain; its full sequence is Adenylate kinase (217 aa).

10 to 15 is a binding site for ATP; sequence GAGKGT. The NMP stretch occupies residues 30-59; the sequence is STGDIFRQNLRDNTDLGKLAKEYMDKGLLV. AMP is bound by residues threonine 31, arginine 36, 57–59, 85–88, and glutamine 92; these read LLV and GYPR. An LID region spans residues 126–163; the sequence is GRRVCPNCGATYHIKTSPPAVDNVCDKCGAQLIQRSDD. Arginine 127 is a binding site for ATP. Zn(2+) is bound by residues cysteine 130 and cysteine 133. 136 to 137 is an ATP binding site; sequence TY. Positions 150 and 153 each coordinate Zn(2+). AMP-binding residues include arginine 160 and arginine 171. Lysine 199 provides a ligand contact to ATP.

This sequence belongs to the adenylate kinase family. As to quaternary structure, monomer.

The protein localises to the cytoplasm. The enzyme catalyses AMP + ATP = 2 ADP. Its pathway is purine metabolism; AMP biosynthesis via salvage pathway; AMP from ADP: step 1/1. Catalyzes the reversible transfer of the terminal phosphate group between ATP and AMP. Plays an important role in cellular energy homeostasis and in adenine nucleotide metabolism. This Thermoanaerobacter pseudethanolicus (strain ATCC 33223 / 39E) (Clostridium thermohydrosulfuricum) protein is Adenylate kinase.